The following is a 576-amino-acid chain: Probable lysosomal cobalamin transporter (576 aa).

10 consecutive transmembrane segments (helical) span residues 8-28 (LIWA…SVFI), 40-60 (VVTF…LLLP), 98-118 (YLLY…VYFW), 145-165 (TISF…VPVA), 188-208 (VLTF…ILYT), 312-332 (LLGG…MLLT), 347-367 (GYIL…VQSA), 377-397 (LTVV…TIGI), 419-439 (LTTA…PMLV), and 503-523 (FFGT…LLVL). The tract at residues 549–576 (RLLTSSARGVGDTYQSVGGRNNFSTRAG) is disordered. Residues 561-576 (TYQSVGGRNNFSTRAG) show a composition bias toward polar residues. N-linked (GlcNAc...) asparagine glycosylation is present at N570.

This sequence belongs to the LIMR family. LMBRD1 subfamily.

It is found in the lysosome membrane. Functionally, probable lysosomal cobalamin transporter. Required to export cobalamin from lysosomes allowing its conversion to cofactors. The protein is Probable lysosomal cobalamin transporter of Aspergillus niger (strain ATCC MYA-4892 / CBS 513.88 / FGSC A1513).